The primary structure comprises 453 residues: Bifunctional protein GlmU (453 aa).

A pyrophosphorylase region spans residues 1-227; the sequence is MTQLSVVILA…LMEVEGANNR (227 aa). UDP-N-acetyl-alpha-D-glucosamine-binding positions include 9–12, K23, Q74, 79–80, 101–103, G138, E152, N167, and N225; these read LAAG, GT, and YGD. Residue D103 participates in Mg(2+) binding. N225 contributes to the Mg(2+) binding site. The linker stretch occupies residues 228–248; it reads LQLAALERYYQKIQAEKLLLA. The interval 249–453 is N-acetyltransferase; the sequence is GVTIIDPARF…IQGWQRPTKK (205 aa). 2 residues coordinate UDP-N-acetyl-alpha-D-glucosamine: R331 and K349. H361 functions as the Proton acceptor in the catalytic mechanism. Residues Y364 and N375 each coordinate UDP-N-acetyl-alpha-D-glucosamine. Acetyl-CoA is bound by residues A378, 384–385, S403, A421, and R438; that span reads NY.

In the N-terminal section; belongs to the N-acetylglucosamine-1-phosphate uridyltransferase family. It in the C-terminal section; belongs to the transferase hexapeptide repeat family. In terms of assembly, homotrimer. The cofactor is Mg(2+).

The protein resides in the cytoplasm. It catalyses the reaction alpha-D-glucosamine 1-phosphate + acetyl-CoA = N-acetyl-alpha-D-glucosamine 1-phosphate + CoA + H(+). The enzyme catalyses N-acetyl-alpha-D-glucosamine 1-phosphate + UTP + H(+) = UDP-N-acetyl-alpha-D-glucosamine + diphosphate. It participates in nucleotide-sugar biosynthesis; UDP-N-acetyl-alpha-D-glucosamine biosynthesis; N-acetyl-alpha-D-glucosamine 1-phosphate from alpha-D-glucosamine 6-phosphate (route II): step 2/2. It functions in the pathway nucleotide-sugar biosynthesis; UDP-N-acetyl-alpha-D-glucosamine biosynthesis; UDP-N-acetyl-alpha-D-glucosamine from N-acetyl-alpha-D-glucosamine 1-phosphate: step 1/1. Its pathway is bacterial outer membrane biogenesis; LPS lipid A biosynthesis. Its function is as follows. Catalyzes the last two sequential reactions in the de novo biosynthetic pathway for UDP-N-acetylglucosamine (UDP-GlcNAc). The C-terminal domain catalyzes the transfer of acetyl group from acetyl coenzyme A to glucosamine-1-phosphate (GlcN-1-P) to produce N-acetylglucosamine-1-phosphate (GlcNAc-1-P), which is converted into UDP-GlcNAc by the transfer of uridine 5-monophosphate (from uridine 5-triphosphate), a reaction catalyzed by the N-terminal domain. The sequence is that of Bifunctional protein GlmU from Glaesserella parasuis serovar 5 (strain SH0165) (Haemophilus parasuis).